The sequence spans 220 residues: uncharacterized protein (220 aa).

The segment at 1–50 is disordered; the sequence is MTDDVRDVNTETTDATEVAEIDSAAGEAGDSATEAFDTDSATESTAQKGQ. Positions 39–48 are enriched in polar residues; that stretch reads DSATESTAQK. A helical transmembrane segment spans residues 65–85; sequence VPVILILLMLISGGATGWLYL.

To M.tuberculosis Rv1363c.

The protein resides in the membrane. This is an uncharacterized protein from Mycobacterium tuberculosis (strain CDC 1551 / Oshkosh).